The sequence spans 324 residues: Cathepsin L-like proteinase (324 aa).

Positions 1 to 16 (MKLIIALAALIVVINA) are cleaved as a signal peptide. 3 cysteine pairs are disulfide-bonded: cysteine 131/cysteine 174, cysteine 165/cysteine 206, and cysteine 263/cysteine 312. Cysteine 134 is an active-site residue. Catalysis depends on residues histidine 270 and asparagine 290.

Belongs to the peptidase C1 family. In terms of tissue distribution, expressed in larval carcasses and gut, and adult gut.

This Phaedon cochleariae (Mustard beetle) protein is Cathepsin L-like proteinase.